A 72-amino-acid chain; its full sequence is Protein SlyX (72 aa).

Residues 53–72 (KSSQSSMLARPEDETPPPHY) form a disordered region.

Belongs to the SlyX family.

This chain is Protein SlyX, found in Proteus mirabilis (strain HI4320).